The following is a 202-amino-acid chain: FMN-dependent NADH:quinone oxidoreductase 2 (202 aa).

FMN-binding positions include Ser-9, 15 to 17 (SVS), 93 to 96 (MYNF), and 137 to 140 (SRGG).

Belongs to the azoreductase type 1 family. In terms of assembly, homodimer. The cofactor is FMN.

It carries out the reaction 2 a quinone + NADH + H(+) = 2 a 1,4-benzosemiquinone + NAD(+). The enzyme catalyses N,N-dimethyl-1,4-phenylenediamine + anthranilate + 2 NAD(+) = 2-(4-dimethylaminophenyl)diazenylbenzoate + 2 NADH + 2 H(+). In terms of biological role, quinone reductase that provides resistance to thiol-specific stress caused by electrophilic quinones. Also exhibits azoreductase activity. Catalyzes the reductive cleavage of the azo bond in aromatic azo compounds to the corresponding amines. This chain is FMN-dependent NADH:quinone oxidoreductase 2, found in Bradyrhizobium diazoefficiens (strain JCM 10833 / BCRC 13528 / IAM 13628 / NBRC 14792 / USDA 110).